Here is a 101-residue protein sequence, read N- to C-terminus: Small ribosomal subunit protein uS10 (101 aa).

It belongs to the universal ribosomal protein uS10 family. Part of the 30S ribosomal subunit.

Involved in the binding of tRNA to the ribosomes. This Corynebacterium urealyticum (strain ATCC 43042 / DSM 7109) protein is Small ribosomal subunit protein uS10.